Here is a 124-residue protein sequence, read N- to C-terminus: Small ribosomal subunit protein eS25 (124 aa).

The segment covering 1-22 (MPPKDSKQKKDTSKAKKDKDPV) has biased composition (basic and acidic residues). The disordered stretch occupies residues 1-37 (MPPKDSKQKKDTSKAKKDKDPVNKSGGKAKKKKWSKG). Positions 27–37 (GKAKKKKWSKG) are enriched in basic residues.

Belongs to the eukaryotic ribosomal protein eS25 family. Component of the small ribosomal subunit.

It is found in the cytoplasm. Its function is as follows. Component of the small ribosomal subunit. The ribosome is a large ribonucleoprotein complex responsible for the synthesis of proteins in the cell. The protein is Small ribosomal subunit protein eS25 (rps25) of Ictalurus punctatus (Channel catfish).